The following is a 340-amino-acid chain: tRNA N6-adenosine threonylcarbamoyltransferase (340 aa).

Fe cation is bound by residues histidine 111 and histidine 115. Substrate-binding positions include 134-138 (LVSGG), aspartate 167, glycine 180, and asparagine 272. Aspartate 300 is a Fe cation binding site.

Belongs to the KAE1 / TsaD family. It depends on Fe(2+) as a cofactor.

It localises to the cytoplasm. The catalysed reaction is L-threonylcarbamoyladenylate + adenosine(37) in tRNA = N(6)-L-threonylcarbamoyladenosine(37) in tRNA + AMP + H(+). Functionally, required for the formation of a threonylcarbamoyl group on adenosine at position 37 (t(6)A37) in tRNAs that read codons beginning with adenine. Is involved in the transfer of the threonylcarbamoyl moiety of threonylcarbamoyl-AMP (TC-AMP) to the N6 group of A37, together with TsaE and TsaB. TsaD likely plays a direct catalytic role in this reaction. In Proteus mirabilis (strain HI4320), this protein is tRNA N6-adenosine threonylcarbamoyltransferase.